A 210-amino-acid polypeptide reads, in one-letter code: MRIILIGSPGSGKGTQAKIMSKKYNLPHISCGDILRKQNKCCDINKLIKKGELINDKLVTNIVLEKLKNINLFKGFILDGFPRTLYQANSIKENKIKIDYVLELFLQEKYIYERVLGRIIDKVSGEIYHLKFNPPKFITEKSNKNKILVRRLDDKKSALQKRINDFFKNSCLISEFYKKESLEKKLKYKIINADFDINTISNKIFNIINV.

10–15 lines the ATP pocket; it reads GSGKGT. Residues 30–54 form an NMP region; sequence SCGDILRKQNKCCDINKLIKKGELI. AMP-binding positions include Arg36, 52–54, 80–83, and Gln87; these read ELI and GFPR. Residues 117–154 form an LID region; it reads GRIIDKVSGEIYHLKFNPPKFITEKSNKNKILVRRLDD. Residues Arg118 and 127–128 contribute to the ATP site; that span reads IY. Residues Arg151 and Arg162 each contribute to the AMP site. Phe195 contributes to the ATP binding site.

The protein belongs to the adenylate kinase family. Monomer.

Its subcellular location is the cytoplasm. The catalysed reaction is AMP + ATP = 2 ADP. It participates in purine metabolism; AMP biosynthesis via salvage pathway; AMP from ADP: step 1/1. In terms of biological role, catalyzes the reversible transfer of the terminal phosphate group between ATP and AMP. Plays an important role in cellular energy homeostasis and in adenine nucleotide metabolism. The chain is Adenylate kinase from Wigglesworthia glossinidia brevipalpis.